An 82-amino-acid chain; its full sequence is Small ribosomal subunit protein bS16 (82 aa).

It belongs to the bacterial ribosomal protein bS16 family.

This Vibrio vulnificus (strain CMCP6) protein is Small ribosomal subunit protein bS16.